The primary structure comprises 38 residues: Kappa-actitoxin-Bcs3a (38 aa).

In terms of domain architecture, ShKT spans 2-37 (CIDRFPTGTCKHVKKGGSCKNSQKYRINCAKTCGLC). Intrachain disulfides connect Cys-2–Cys-37, Cys-11–Cys-30, and Cys-20–Cys-34. A crucial for binding to potassium channels region spans residues 25 to 26 (KY).

The protein belongs to the sea anemone type 1 potassium channel toxin family. Type 1b subfamily.

It is found in the secreted. The protein resides in the nematocyst. In terms of biological role, inhibits voltage-gated potassium channels (IC(50)=405.0 nM for rKCNA1/Kv1.1, IC(50)=0.03 nM for rKCNA2/Kv1.2, IC(50)=1.31 nM for rKCNA6/Kv1.6, IC(50)=74.11 nM for hKCNA3/Kv1.3, and IC(50)=247.69 nM for insect Shaker IR). Binds the Shaker IR channels in a voltage-independent manner. The polypeptide is Kappa-actitoxin-Bcs3a (Bunodosoma caissarum (Sea anemone)).